Here is a 177-residue protein sequence, read N- to C-terminus: Large ribosomal subunit protein uL6 (177 aa).

The protein belongs to the universal ribosomal protein uL6 family. In terms of assembly, part of the 50S ribosomal subunit.

This protein binds to the 23S rRNA, and is important in its secondary structure. It is located near the subunit interface in the base of the L7/L12 stalk, and near the tRNA binding site of the peptidyltransferase center. In Janthinobacterium sp. (strain Marseille) (Minibacterium massiliensis), this protein is Large ribosomal subunit protein uL6.